A 421-amino-acid polypeptide reads, in one-letter code: 4-hydroxy-3-methylbut-2-en-1-yl diphosphate synthase (flavodoxin) (421 aa).

The [4Fe-4S] cluster site is built by C298, C301, C344, and E351.

The protein belongs to the IspG family. [4Fe-4S] cluster serves as cofactor.

The catalysed reaction is (2E)-4-hydroxy-3-methylbut-2-enyl diphosphate + oxidized [flavodoxin] + H2O + 2 H(+) = 2-C-methyl-D-erythritol 2,4-cyclic diphosphate + reduced [flavodoxin]. It functions in the pathway isoprenoid biosynthesis; isopentenyl diphosphate biosynthesis via DXP pathway; isopentenyl diphosphate from 1-deoxy-D-xylulose 5-phosphate: step 5/6. Functionally, converts 2C-methyl-D-erythritol 2,4-cyclodiphosphate (ME-2,4cPP) into 1-hydroxy-2-methyl-2-(E)-butenyl 4-diphosphate. In Neisseria meningitidis serogroup C / serotype 2a (strain ATCC 700532 / DSM 15464 / FAM18), this protein is 4-hydroxy-3-methylbut-2-en-1-yl diphosphate synthase (flavodoxin).